The chain runs to 311 residues: Putative mitochondrial transporter UCP3 (311 aa).

Over 1-10 the chain is Mitochondrial intermembrane; it reads MVGLKPSEVP. Residues 11–32 form a helical membrane-spanning segment; the sequence is PTTAVKFLGAGTAACFADLLTF. Solcar repeat units follow at residues 11 to 105, 114 to 205, and 214 to 299; these read PTTA…VKQF, SSIT…IKEK, and DNFP…LKRA. The Mitochondrial matrix portion of the chain corresponds to 33 to 76; that stretch reads PLDTAKVRLQIQGENQATQAARRIQYRGVLGTILTMVRTEGPRS. A helical transmembrane segment spans residues 77–99; the sequence is PYNGLVAGLQRQMSFASIRIGLY. At 100–119 the chain is on the mitochondrial intermembrane side; that stretch reads DSVKQFYTPKGSDHSSITTR. The chain crosses the membrane as a helical span at residues 120 to 136; it reads ILAGCTTGAMAVSCAQP. Topologically, residues 137 to 182 are mitochondrial matrix; sequence TDVVKVRFQASIHLGAGSNRKYSGTMDAYRTIAREEGVRGLWKGTL. A helical transmembrane segment spans residues 183 to 199; sequence PNITRNAIVNCAEMVTY. The Mitochondrial intermembrane segment spans residues 200–216; sequence DIIKEKLLDYHLLTDNF. The chain crosses the membrane as a helical span at residues 217–236; that stretch reads PCHLISAFGAGFCATVVASP. The Mitochondrial matrix portion of the chain corresponds to 237–270; that stretch reads VDVVKTRYMNSPPGQYCSPLDCMLKMVTQEGPTA. A helical membrane pass occupies residues 271 to 293; the sequence is FYKGFTPSFLRLGTWNVVMFVTY. The tract at residues 278–300 is purine nucleotide binding; the sequence is SFLRLGTWNVVMFVTYEQLKRAL. The Mitochondrial intermembrane portion of the chain corresponds to 294–311; sequence EQLKRALMKVQMLRESPF.

The protein belongs to the mitochondrial carrier (TC 2.A.29) family. In terms of assembly, interacts with HAX1; the interaction is direct and calcium-dependent.

The protein localises to the mitochondrion inner membrane. Functionally, putative transmembrane transporter that plays a role in mitochondrial metabolism via an as yet unclear mechanism. Originally, this mitochondrial protein was thought to act as a proton transmembrane transporter from the mitochondrial intermembrane space into the matrix, causing proton leaks through the inner mitochondrial membrane, thereby uncoupling mitochondrial membrane potential generation from ATP synthesis. However, this function is controversial and uncoupling may not be the function, or at least not the main function, but rather a consequence of more conventional metabolite transporter activity. The sequence is that of Putative mitochondrial transporter UCP3 from Canis lupus familiaris (Dog).